A 213-amino-acid polypeptide reads, in one-letter code: N-(5'-phosphoribosyl)anthranilate isomerase (213 aa).

The protein belongs to the TrpF family.

It catalyses the reaction N-(5-phospho-beta-D-ribosyl)anthranilate = 1-(2-carboxyphenylamino)-1-deoxy-D-ribulose 5-phosphate. Its pathway is amino-acid biosynthesis; L-tryptophan biosynthesis; L-tryptophan from chorismate: step 3/5. The polypeptide is N-(5'-phosphoribosyl)anthranilate isomerase (Hahella chejuensis (strain KCTC 2396)).